A 468-amino-acid polypeptide reads, in one-letter code: Argininosuccinate lyase (468 aa).

This sequence belongs to the lyase 1 family. Argininosuccinate lyase subfamily.

It is found in the cytoplasm. The catalysed reaction is 2-(N(omega)-L-arginino)succinate = fumarate + L-arginine. Its pathway is amino-acid biosynthesis; L-arginine biosynthesis; L-arginine from L-ornithine and carbamoyl phosphate: step 3/3. The sequence is that of Argininosuccinate lyase from Paraburkholderia xenovorans (strain LB400).